The primary structure comprises 42 residues: Potassium channel toxin gamma-KTx 1.5 (42 aa).

4 disulfides stabilise this stretch: Cys-5–Cys-23, Cys-11–Cys-34, Cys-20–Cys-39, and Cys-24–Cys-41.

The protein belongs to the ergtoxin family. Gamma-KTx 1 subfamily. Expressed by the venom gland.

It localises to the secreted. In terms of biological role, blocks Kv11/ERG potassium channels. The sequence is that of Potassium channel toxin gamma-KTx 1.5 from Centruroides limpidus (Mexican scorpion).